The primary structure comprises 129 residues: MIQDTIADMLTRIRNANAMRIYTVCMPMTSVAREIAVILETEGWIDSWKEASVNSLILRLKYRGAKQQPILTGLRRVSRSGCRVYVSAKEVPKVLGGMGTAIISTSKGIMTDREARNHRLGGEVICLIW.

Belongs to the universal ribosomal protein uS8 family. In terms of assembly, part of the 30S ribosomal subunit.

It is found in the plastid. The protein localises to the chloroplast. In terms of biological role, one of the primary rRNA binding proteins, it binds directly to 16S rRNA central domain where it helps coordinate assembly of the platform of the 30S subunit. The polypeptide is Small ribosomal subunit protein uS8c (rps8) (Nephroselmis olivacea (Green alga)).